Reading from the N-terminus, the 250-residue chain is 5'-nucleotidase SurE (250 aa).

The a divalent metal cation site is built by Asp-8, Asp-9, Ser-40, and Asn-94.

The protein belongs to the SurE nucleotidase family. A divalent metal cation serves as cofactor.

Its subcellular location is the cytoplasm. It catalyses the reaction a ribonucleoside 5'-phosphate + H2O = a ribonucleoside + phosphate. Nucleotidase that shows phosphatase activity on nucleoside 5'-monophosphates. In Wolbachia sp. subsp. Brugia malayi (strain TRS), this protein is 5'-nucleotidase SurE.